Here is a 178-residue protein sequence, read N- to C-terminus: Large ribosomal subunit protein uL6 (178 aa).

Belongs to the universal ribosomal protein uL6 family. As to quaternary structure, part of the 50S ribosomal subunit.

This protein binds to the 23S rRNA, and is important in its secondary structure. It is located near the subunit interface in the base of the L7/L12 stalk, and near the tRNA binding site of the peptidyltransferase center. This Arthrobacter sp. (strain FB24) protein is Large ribosomal subunit protein uL6.